Reading from the N-terminus, the 2104-residue chain is Protein Ycf2 (2104 aa).

1396–1403 (GPVETGRS) is an ATP binding site.

Belongs to the Ycf2 family.

The protein resides in the plastid. It localises to the chloroplast stroma. Probable ATPase of unknown function. Its presence in a non-photosynthetic plant (Epifagus virginiana) and experiments in tobacco indicate that it has an essential function which is probably not related to photosynthesis. This Adiantum capillus-veneris (Maidenhair fern) protein is Protein Ycf2 (ycf2-A).